The chain runs to 164 residues: Protein SprT (164 aa).

The SprT-like domain maps to 13 to 156 (YQQAEAFFKR…LCKRCREILV (144 aa)). Histidine 69 contributes to the Zn(2+) binding site. Residue glutamate 70 is part of the active site. Position 73 (histidine 73) interacts with Zn(2+).

The protein belongs to the SprT family. The cofactor is Zn(2+).

The protein localises to the cytoplasm. The sequence is that of Protein SprT from Pseudomonas putida (strain ATCC 700007 / DSM 6899 / JCM 31910 / BCRC 17059 / LMG 24140 / F1).